A 216-amino-acid chain; its full sequence is Pyrophosphatase PpaX (216 aa).

The active-site Nucleophile is aspartate 9.

Belongs to the HAD-like hydrolase superfamily. PpaX family. Mg(2+) serves as cofactor.

It catalyses the reaction diphosphate + H2O = 2 phosphate + H(+). In terms of biological role, hydrolyzes pyrophosphate formed during P-Ser-HPr dephosphorylation by HPrK/P. Might play a role in controlling the intracellular pyrophosphate pool. In Bacillus anthracis (strain A0248), this protein is Pyrophosphatase PpaX.